An 84-amino-acid chain; its full sequence is uncharacterized protein (84 aa).

2 helical membrane-spanning segments follow: residues 7-27 (HVNF…ILCI) and 52-72 (ITII…INPC).

The protein resides in the membrane. This is an uncharacterized protein from Saccharomyces cerevisiae (strain ATCC 204508 / S288c) (Baker's yeast).